The chain runs to 348 residues: 3'-dehydrocarminate deglycosidase alpha subunit (348 aa).

A Mg(2+)-binding site is contributed by Glu-145. The active-site Proton acceptor is His-147. Mg(2+) contacts are provided by Asp-177, His-275, and Glu-311.

It belongs to the C-glycoside deglycosidase alpha subunit family. Heterodimer composed of an alpha subunit (CarB) and a beta subunit (CarC). Requires Mg(2+) as cofactor.

The enzyme catalyses 3'-dehydrocarminate + H(+) = kermesate + 1,5-anhydro-D-erythro-hex-1-en-3-ulose. Activity is strongly reduced in the presence of chelating agents. In terms of biological role, carbon-carbon bond-cleaving enzyme which participates in a carminate degradation pathway. Cleaves the C-C bond in 3'-dehydrocarminate to form kermesate. Also shows weak activity with other C-glycosides, such as 3''-dehydropuerarin (3''-oxo-puerarin), 3''-dehydroisoorientin (3''-oxo-homoorientin) and 3'-dehydromangiferin (3'-oxo-mangiferin). This is 3'-dehydrocarminate deglycosidase alpha subunit from Microbacterium sp.